A 314-amino-acid chain; its full sequence is Solute carrier family 25 member 33 (314 aa).

Solcar repeat units follow at residues 4-111 (KDTL…SKET), 119-206 (NSGV…LKKY), and 224-308 (SDFL…IVHL). 6 helical membrane-spanning segments follow: residues 7–27 (LLHLFAGGCGGTVGAIMTCPL), 44–58 (VFQVQLGTLNGAGVI), 114–134 (GIFVPNSGVVHMSSAGFAAFI), 183–203 (LTASYAGISETMICFLIYETL), 226–246 (FLGLMFAAAFAKGCASCIAYP), and 291–311 (QIPNTAIVLSTYELIVHLLAE).

Belongs to the mitochondrial carrier (TC 2.A.29) family.

The protein localises to the mitochondrion inner membrane. In terms of biological role, mitochondrial transporter that imports/exports pyrimidine nucleotides into and from mitochondria which participates in dendritic cell endocytosis. This is Solute carrier family 25 member 33 (slc25a33) from Danio rerio (Zebrafish).